A 357-amino-acid polypeptide reads, in one-letter code: MASTRNGISKDELLPTYELQSQRDVENSGSVTSFASKISNNAAAAVLAYCLSSISMTLVNKYVVSGASWNLSFLYLAIQSFIGTVAIMVCKKAGLIQNLGLFDLKKAQTWLPISLLLVGMIYTGNKALQFLSVPVYTIFKNLTIIVIAYGEVFMVGGSVKPLALLSFGLMVLSSVVAAWADIQIATAATAKASSDSAVATLSALNAGYAWMGTNVVFSASYALGMRRVIKKTNFDNWDVMFYNNLLSVPILLLSSLLVEDWSSENLQRNFPAESRQSLVIGIFYSGVAAIFISYCTAWCVRATSSTTYAMVGALNKLPLAVAGIVFFAAPVTFGSVSAIVLGFISGLVYTWAKSTGA.

Residues 1-43 lie on the Cytoplasmic side of the membrane; the sequence is MASTRNGISKDELLPTYELQSQRDVENSGSVTSFASKISNNAA. Residues 44–64 traverse the membrane as a helical segment; that stretch reads AAVLAYCLSSISMTLVNKYVV. Over 65-68 the chain is Lumenal; it reads SGAS. A helical transmembrane segment spans residues 69–89; it reads WNLSFLYLAIQSFIGTVAIMV. Residues 90-107 lie on the Cytoplasmic side of the membrane; sequence CKKAGLIQNLGLFDLKKA. A helical transmembrane segment spans residues 108 to 128; sequence QTWLPISLLLVGMIYTGNKAL. A topological domain (lumenal) is located at residue Gln129. A helical membrane pass occupies residues 130–150; sequence FLSVPVYTIFKNLTIIVIAYG. At 151-161 the chain is on the cytoplasmic side; it reads EVFMVGGSVKP. The helical transmembrane segment at 162–182 threads the bilayer; the sequence is LALLSFGLMVLSSVVAAWADI. The Lumenal portion of the chain corresponds to 183-196; the sequence is QIATAATAKASSDS. Residues 197–217 traverse the membrane as a helical segment; sequence AVATLSALNAGYAWMGTNVVF. Residues 218–238 lie on the Cytoplasmic side of the membrane; that stretch reads SASYALGMRRVIKKTNFDNWD. Residues 239-259 traverse the membrane as a helical segment; the sequence is VMFYNNLLSVPILLLSSLLVE. Over 260 to 277 the chain is Lumenal; sequence DWSSENLQRNFPAESRQS. Residues 278–298 traverse the membrane as a helical segment; the sequence is LVIGIFYSGVAAIFISYCTAW. The Cytoplasmic portion of the chain corresponds to 299–306; the sequence is CVRATSST. Residues 307–327 form a helical membrane-spanning segment; sequence TYAMVGALNKLPLAVAGIVFF. Over 328 to 332 the chain is Lumenal; it reads AAPVT. The helical transmembrane segment at 333 to 352 threads the bilayer; it reads FGSVSAIVLGFISGLVYTWA. The Cytoplasmic portion of the chain corresponds to 353–357; sequence KSTGA.

This sequence belongs to the TPT transporter family. SLC35D subfamily. Homooligomer.

It is found in the golgi apparatus membrane. The protein resides in the cytoplasmic vesicle membrane. Its subcellular location is the endoplasmic reticulum membrane. Its function is as follows. Involved in the import of GDP-mannose from the cytoplasm into the Golgi lumen. In Emericella nidulans (strain FGSC A4 / ATCC 38163 / CBS 112.46 / NRRL 194 / M139) (Aspergillus nidulans), this protein is GDP-mannose transporter 2 (gmt2).